We begin with the raw amino-acid sequence, 211 residues long: Interleukin-6 (211 aa).

A signal peptide spans 1–24 (MKFLSARDFHPVAFLGLMLVTTTA). 2 disulfide bridges follow: C70/C76 and C99/C109.

This sequence belongs to the IL-6 superfamily. As to quaternary structure, component of a hexamer of two molecules each of IL6, IL6R and IL6ST; first binds to IL6R to associate with the signaling subunit IL6ST. Interacts with IL6R (via the N-terminal ectodomain); this interaction may be affected by IL6R-binding with SORL1, hence decreasing IL6 cis signaling. Interacts with SORL1 (via the N-terminal ectodomain); this interaction leads to IL6 internalization and lysosomal degradation. May form a trimeric complex with the soluble SORL1 ectodomain and soluble IL6R receptor; this interaction might stabilize circulating IL6, hence promoting IL6 trans signaling. Post-translationally, N- and O-glycosylated. As to expression, expressed by dendritic cells and macrophages. Expressed by activated follicular B cells. Abundantly expressed in the central nervous system (CNS), particularly the hypothalamic region.

The protein resides in the secreted. Its function is as follows. Cytokine with a wide variety of biological functions in immunity, tissue regeneration, and metabolism. Binds to IL6R, then the complex associates to the signaling subunit IL6ST/gp130 to trigger the intracellular IL6-signaling pathway. The interaction with the membrane-bound IL6R and IL6ST stimulates 'classic signaling', whereas the binding of IL6 and soluble IL6R to IL6ST stimulates 'trans-signaling'. Alternatively, 'cluster signaling' occurs when membrane-bound IL6:IL6R complexes on transmitter cells activate IL6ST receptors on neighboring receiver cells. IL6 is a potent inducer of the acute phase response. Rapid production of IL6 contributes to host defense during infection and tissue injury, but excessive IL6 synthesis is involved in disease pathology. In the innate immune response, is synthesized by myeloid cells, such as macrophages and dendritic cells, upon recognition of pathogens through toll-like receptors (TLRs) at the site of infection or tissue injury. In the adaptive immune response, is required for the differentiation of B-cells into immunoglolin-secreting cells. Plays a major role in the differentiation of CD4(+) T cell subsets. Essential factor for the development of T follicular helper (Tfh) cells that are required for the induction of germinal-center formation. Together with IL21, controls the early generation of Tfh cells and are critical for an effective antibody response to acute viral infection. Required to drive naive CD4(+) T cells to the Th17 lineage, through 'cluster signaling' by dendritic cells. Also required for proliferation of myeloma cells and the survival of plasmablast cells. Functionally, acts as an essential factor in bone homeostasis and on vessels directly or indirectly by induction of VEGF, resulting in increased angiogenesis activity and vascular permeability. Induces, through 'trans-signaling' and synergistically with IL1B and TNF, the production of VEGF. Involved in metabolic controls, is discharged into the bloodstream after muscle contraction increasing lipolysis and improving insulin resistance. 'Trans-signaling' in central nervous system regulates energy and glucose homeostasis. Mediates, through GLP-1, crosstalk between insulin-sensitive tissues, intestinal L cells and pancreatic islets to adapt to changes in insulin demand. Also acts as a myokine. Plays a protective role during liver injury, being required for maintenance of tissue regeneration. Also has a pivotal role in iron metabolism by regulating HAMP/hepcidin expression upon inflammation or bacterial infection. Through activation of IL6ST-YAP-NOTCH pathway, induces inflammation-induced epithelial regeneration. The sequence is that of Interleukin-6 from Mus musculus (Mouse).